A 431-amino-acid polypeptide reads, in one-letter code: E3 ubiquitin-protein ligase marc-3 (431 aa).

The segment at 5-74 adopts an RING-CH-type zinc-finger fold; sequence NASLGPAVCR…EICKFAFKIK (70 aa). Residues C13, C16, C38, C40, H48, C51, C64, and C67 each contribute to the Zn(2+) site. The next 2 membrane-spanning stretches (helical) occupy residues 98 to 118 and 157 to 177; these read PFIDFAFVLLILPFAFFGVFM and LFLFVALLLFSAFITLVVSAL. 2 disordered regions span residues 267–289 and 327–349; these read TSPDSNNTHHHDESRNEIPFGRR and SRATSTRRESGISPESSSRRDMR. Basic and acidic residues predominate over residues 273–282; the sequence is NTHHHDESRN.

Its subcellular location is the cell membrane. The protein localises to the endosome membrane. The enzyme catalyses S-ubiquitinyl-[E2 ubiquitin-conjugating enzyme]-L-cysteine + [acceptor protein]-L-lysine = [E2 ubiquitin-conjugating enzyme]-L-cysteine + N(6)-ubiquitinyl-[acceptor protein]-L-lysine.. Its pathway is protein modification; protein ubiquitination. In terms of biological role, E3 ubiquitin-protein ligase which positively regulates the fast polyspermy block during fertilization, preventing entry of more than one sperm into the oocyte. After fertilization, required in the zygote for the selective degradation of a subset of maternal membrane proteins including cav-1, chs-1 and rme-2, probably by mediating their K63-linked polyubiquitination. In Caenorhabditis elegans, this protein is E3 ubiquitin-protein ligase marc-3.